Consider the following 443-residue polypeptide: Intermediate filament protein ifd-2 (443 aa).

Residues 1-58 (MTDPLNPTRLQNHPALARIIESGRTNLPTGITTSGALSAYAQNAAAIIRDNREREKVE) are head. Positions 55–405 (EKVEIADLNN…KLMENAEHLR (351 aa)) constitute an IF rod domain. The coil 1A stretch occupies residues 59–90 (IADLNNRLARYVEKVRFLEAQNRVLENDIGVF). Residues 91–104 (RNAAHTHSERIAVY) are linker 1. The tract at residues 105–239 (FESEKASLFT…SQHDIAIREE (135 aa)) is coil 1B. The segment at 240 to 257 (ISKARRDTTNKNRDYFHN) is linker 12. The tract at residues 258–403 (ELHAAMKEIR…YRKLMENAEH (146 aa)) is coil 2. Residues 404–443 (LRTTVQTHVTYNAPPPPLPQSGPRTTSYHAYGSAYNDSLL) form a tail region.

This sequence belongs to the intermediate filament family.

The protein resides in the cytoplasm. Cytoplasmic intermediate filaments provide mechanical strength to cells. Not essential protein. The sequence is that of Intermediate filament protein ifd-2 (ifd-2) from Caenorhabditis elegans.